Here is a 960-residue protein sequence, read N- to C-terminus: Mast/stem cell growth factor receptor Kit (960 aa).

The signal sequence occupies residues 1–24; that stretch reads MEGAHLAWELAHAVLLLSLIPAGG. At 25 to 511 the chain is on the extracellular side; it reads SVPHEESSLV…IRTHTLFTPL (487 aa). 5 consecutive Ig-like C2-type domains span residues 27–102, 111–194, 201–294, 303–396, and 399–497; these read PHEE…VFVK, DSLI…LNVR, PVIT…LKAL, ATMN…VYVK, and PEIL…FNFA. 4 cysteine pairs are disulfide-bonded: Cys45–Cys87, Cys126–Cys175, Cys141–Cys172, and Cys222–Cys276. N-linked (GlcNAc...) asparagine glycosylation is found at Asn76, Asn135, Asn149, Asn269, Asn286, Asn306, Asn318, Asn338, Asn343, Asn356, Asn453, and Asn469. An intrachain disulfide couples Cys414 to Cys481. A helical membrane pass occupies residues 512 to 532; the sequence is LIAFGVAAGLMCIIVMILVYI. At 533 to 960 the chain is on the cytoplasmic side; the sequence is YLQKPKYEVQ…TQPLLVREDV (428 aa). Tyr554 contacts Mg(2+). 2 positions are modified to phosphotyrosine; by autocatalysis: Tyr554 and Tyr556. The Protein kinase domain occupies 575–913; that stretch reads LSFGKTLGAG…QIVQLIEQQL (339 aa). Residues 582–589, Lys609, and 657–663 contribute to the ATP site; these read GAGAFGKV and EYCCYGD. Tyr689 and Tyr706 each carry phosphotyrosine; by autocatalysis. The Proton acceptor role is filled by Asp777. Arg781 is an ATP binding site. Residues Asn782 and Asp795 each coordinate Mg(2+). Phosphotyrosine; by autocatalysis is present on residues Tyr808 and Tyr921.

It belongs to the protein kinase superfamily. Tyr protein kinase family. CSF-1/PDGF receptor subfamily. Post-translationally, ubiquitinated. KIT is rapidly ubiquitinated after autophosphorylation induced by KITLG/SCF binding, leading to internalization and degradation. Autophosphorylated on tyrosine residues. KITLG/SCF binding promotes autophosphorylation. Phosphorylated tyrosine residues are important for interaction with specific binding partners. High in the brain and testes and also present in the bursa of Fabricus, heart, kidney, lung, spleen thymus and ovary.

The protein localises to the cell membrane. The enzyme catalyses L-tyrosyl-[protein] + ATP = O-phospho-L-tyrosyl-[protein] + ADP + H(+). Tyrosine-protein kinase that acts as a cell-surface receptor for the cytokine KITLG/SCF and plays an essential role in the regulation of cell survival and proliferation, hematopoiesis, stem cell maintenance, gametogenesis, mast cell development, migration and function, and in melanogenesis. In response to KITLG/SCF binding, KIT can activate several signaling pathways. Promotes phosphorylation of PIK3R1, the regulatory subunit of phosphatidylinositol 3-kinase, and subsequent activation of the kinase AKT1. Activated KIT also transmits signals via GRB2 and activation of RAS, RAF1 and the MAP kinases MAPK1/ERK2 and/or MAPK3/ERK1. Promotes activation of STAT family members STAT1, STAT3, STAT5A and STAT5B. KIT promotes activation of PLCG1, leading to the production of the cellular signaling molecules diacylglycerol and inositol 1,4,5-trisphosphate. KIT signaling is modulated by protein phosphatases, and by rapid internalization and degradation of the receptor. This is Mast/stem cell growth factor receptor Kit (KIT) from Gallus gallus (Chicken).